The following is a 292-amino-acid chain: Manganese transport system membrane protein MntC (292 aa).

The next 8 membrane-spanning stretches (helical) occupy residues 20-40 (ALTA…FIIL), 58-78 (VVIA…TGVI), 96-116 (SAIG…ITGM), 137-157 (TDLW…ILFY), 168-188 (VMAQ…MLLL), 190-210 (LVTV…MLIT), 226-246 (LCLA…FSVI), and 249-269 (VASG…AFFF).

The protein belongs to the ABC-3 integral membrane protein family.

It is found in the cell membrane. This protein is probably a component of a manganese permease, a binding protein-dependent, ATP-driven transport system. This chain is Manganese transport system membrane protein MntC (mntC), found in Halalkalibacterium halodurans (strain ATCC BAA-125 / DSM 18197 / FERM 7344 / JCM 9153 / C-125) (Bacillus halodurans).